The chain runs to 170 residues: 3-dehydroquinate dehydratase (170 aa).

Y22 acts as the Proton acceptor in catalysis. Residues N76, H82, and D89 each contribute to the substrate site. H102 acts as the Proton donor in catalysis. Substrate is bound by residues 103 to 104 and R113; that span reads LT.

This sequence belongs to the type-II 3-dehydroquinase family. In terms of assembly, homododecamer.

It carries out the reaction 3-dehydroquinate = 3-dehydroshikimate + H2O. The protein operates within metabolic intermediate biosynthesis; chorismate biosynthesis; chorismate from D-erythrose 4-phosphate and phosphoenolpyruvate: step 3/7. Functionally, catalyzes a trans-dehydration via an enolate intermediate. The polypeptide is 3-dehydroquinate dehydratase (aroQ) (Helicobacter pylori (strain J99 / ATCC 700824) (Campylobacter pylori J99)).